The primary structure comprises 219 residues: Apoptosis regulator OPG045 (219 aa).

It belongs to the orthopoxvirus OPG045 family. Homodimer. Interacts with host pro-apoptotic protein BCL2L11 (via BH3 domain). Interacts with host NLRP1. Interacts with host BAK.

It localises to the host mitochondrion outer membrane. The protein localises to the host cytoplasm. Functionally, plays a role in evading host innate immune response by inhibiting host inflammasome activation. Interacts with and inhibits NLR-mediated interleukin-1 beta/IL1B production in infected cells. At the host mitochondria outer membrane, interacts with the BH3 domain of host BAK and prevents BAK from binding active BAX. In turn, host apoptosis is inhibited. The polypeptide is Apoptosis regulator OPG045 (OPG045) (Cynomys gunnisoni (Gunnison's prairie dog)).